Here is an 869-residue protein sequence, read N- to C-terminus: Valine--tRNA ligase (869 aa).

A 'HIGH' region motif is present at residues 51–61 (PNVTGNLHLGH). Residues 523 to 527 (KMSKS) carry the 'KMSKS' region motif. Lys-526 contacts ATP. A coiled-coil region spans residues 797–869 (EDLLGSNNEA…ELEKLLSSHK (73 aa)).

This sequence belongs to the class-I aminoacyl-tRNA synthetase family. ValS type 1 subfamily. In terms of assembly, monomer.

It is found in the cytoplasm. It carries out the reaction tRNA(Val) + L-valine + ATP = L-valyl-tRNA(Val) + AMP + diphosphate. Catalyzes the attachment of valine to tRNA(Val). As ValRS can inadvertently accommodate and process structurally similar amino acids such as threonine, to avoid such errors, it has a 'posttransfer' editing activity that hydrolyzes mischarged Thr-tRNA(Val) in a tRNA-dependent manner. The protein is Valine--tRNA ligase of Malacoplasma penetrans (strain HF-2) (Mycoplasma penetrans).